The sequence spans 155 residues: S-ribosylhomocysteine lyase (155 aa).

Fe cation is bound by residues His-53, His-57, and Cys-121.

This sequence belongs to the LuxS family. Homodimer. The cofactor is Fe cation.

The catalysed reaction is S-(5-deoxy-D-ribos-5-yl)-L-homocysteine = (S)-4,5-dihydroxypentane-2,3-dione + L-homocysteine. In terms of biological role, involved in the synthesis of autoinducer 2 (AI-2) which is secreted by bacteria and is used to communicate both the cell density and the metabolic potential of the environment. The regulation of gene expression in response to changes in cell density is called quorum sensing. Catalyzes the transformation of S-ribosylhomocysteine (RHC) to homocysteine (HC) and 4,5-dihydroxy-2,3-pentadione (DPD). The protein is S-ribosylhomocysteine lyase of Thermus thermophilus (strain ATCC BAA-163 / DSM 7039 / HB27).